We begin with the raw amino-acid sequence, 172 residues long: VQ motif-containing protein 17 (172 aa).

The VQ motif lies at 51 to 60 (FREIVQNLTG). A disordered region spans residues 60 to 97 (GKQDHHHHDLPHQKGLKRNPRSRRSHDHHEVHDMNKSH). Positions 61–71 (KQDHHHHDLPH) are enriched in basic and acidic residues. Residues 72–85 (QKGLKRNPRSRRSH) show a composition bias toward basic residues. Basic and acidic residues predominate over residues 86–95 (DHHEVHDMNK).

It is found in the nucleus. Functionally, may function as positive regulator of plant growth. This chain is VQ motif-containing protein 17, found in Arabidopsis thaliana (Mouse-ear cress).